Here is a 142-residue protein sequence, read N- to C-terminus: Translation initiation factor 2 subunit beta (142 aa).

This sequence belongs to the eIF-2-beta/eIF-5 family. Heterotrimer composed of an alpha, a beta and a gamma chain.

Its function is as follows. eIF-2 functions in the early steps of protein synthesis by forming a ternary complex with GTP and initiator tRNA. The chain is Translation initiation factor 2 subunit beta from Methanosphaera stadtmanae (strain ATCC 43021 / DSM 3091 / JCM 11832 / MCB-3).